Reading from the N-terminus, the 157-residue chain is 6,7-dimethyl-8-ribityllumazine synthase (157 aa).

5-amino-6-(D-ribitylamino)uracil is bound by residues F30, A64–E66, and C88–I90. Position 93-94 (E93–T94) interacts with (2S)-2-hydroxy-3-oxobutyl phosphate. Catalysis depends on H96, which acts as the Proton donor. N121 is a 5-amino-6-(D-ribitylamino)uracil binding site. Residue R135 coordinates (2S)-2-hydroxy-3-oxobutyl phosphate.

It belongs to the DMRL synthase family.

The catalysed reaction is (2S)-2-hydroxy-3-oxobutyl phosphate + 5-amino-6-(D-ribitylamino)uracil = 6,7-dimethyl-8-(1-D-ribityl)lumazine + phosphate + 2 H2O + H(+). Its pathway is cofactor biosynthesis; riboflavin biosynthesis; riboflavin from 2-hydroxy-3-oxobutyl phosphate and 5-amino-6-(D-ribitylamino)uracil: step 1/2. In terms of biological role, catalyzes the formation of 6,7-dimethyl-8-ribityllumazine by condensation of 5-amino-6-(D-ribitylamino)uracil with 3,4-dihydroxy-2-butanone 4-phosphate. This is the penultimate step in the biosynthesis of riboflavin. The polypeptide is 6,7-dimethyl-8-ribityllumazine synthase (Albidiferax ferrireducens (strain ATCC BAA-621 / DSM 15236 / T118) (Rhodoferax ferrireducens)).